A 103-amino-acid polypeptide reads, in one-letter code: Large ribosomal subunit protein bL21 (103 aa).

This sequence belongs to the bacterial ribosomal protein bL21 family. Part of the 50S ribosomal subunit. Contacts protein L20.

In terms of biological role, this protein binds to 23S rRNA in the presence of protein L20. The chain is Large ribosomal subunit protein bL21 from Burkholderia mallei (strain NCTC 10247).